Reading from the N-terminus, the 353-residue chain is Inactive ADP-ribosyltransferase ARH2 (353 aa).

Serine 27 carries the phosphoserine modification.

It belongs to the ADP-ribosylglycohydrolase family.

It localises to the cytoplasm. It is found in the myofibril. The protein localises to the sarcomere. In terms of biological role, required for myofibril assembly and outgrowth of the cardiac chambers in the developing heart. Appears to be catalytically inactive, showing no activity against O-acetyl-ADP-ribose. In Rattus norvegicus (Rat), this protein is Inactive ADP-ribosyltransferase ARH2 (Adprhl1).